The sequence spans 136 residues: Ig heavy chain V region XIG8 (136 aa).

The signal sequence occupies residues 1 to 18 (GFGIFVIFMFFSPSCILS). One can recognise an Ig-like domain in the interval 19 to 128 (QTLQESGPGT…TAGYFEHWGQ (110 aa)).

The protein is Ig heavy chain V region XIG8 of Xenopus laevis (African clawed frog).